A 454-amino-acid polypeptide reads, in one-letter code: Protein translocase subunit SecY (454 aa).

The next 10 membrane-spanning stretches (helical) occupy residues 43–63 (LTIA…LPYI), 97–117 (FTLG…AFVI), 144–164 (TLLL…AFIF), 168–188 (ILKL…ILWI), 201–221 (SSFL…GMSF), 226–246 (IFSF…WAAI), 289–309 (PVVF…YILL), 334–354 (IVEA…IIDP), 390–410 (LIGA…GFVF), and 414–434 (IFKG…TEIL).

It belongs to the SecY/SEC61-alpha family. As to quaternary structure, component of the plastid Sec protein translocase complex, which is composed of at least SecY and SecE.

It localises to the plastid. It is found in the chloroplast thylakoid membrane. Functionally, the central subunit of the protein translocation channel SecYE. Consists of two halves formed by TMs 1-5 and 6-10. These two domains form a lateral gate at the front which open onto the bilayer between TMs 2 and 7, and are clamped together by SecE at the back. The channel is closed by both a pore ring composed of hydrophobic SecY resides and a short helix (helix 2A) on the extracellular side of the membrane which forms a plug. The sequence is that of Protein translocase subunit SecY from Heterosigma akashiwo (strain NIES-293 / 8280G21-1).